Here is a 143-residue protein sequence, read N- to C-terminus: Large ribosomal subunit protein uL13 (143 aa).

Belongs to the universal ribosomal protein uL13 family. As to quaternary structure, part of the 50S ribosomal subunit.

Its function is as follows. This protein is one of the early assembly proteins of the 50S ribosomal subunit, although it is not seen to bind rRNA by itself. It is important during the early stages of 50S assembly. The polypeptide is Large ribosomal subunit protein uL13 (Caldanaerobacter subterraneus subsp. tengcongensis (strain DSM 15242 / JCM 11007 / NBRC 100824 / MB4) (Thermoanaerobacter tengcongensis)).